The chain runs to 422 residues: Serine--tRNA ligase (422 aa).

Residue 229–231 (TAE) participates in L-serine binding. Residue 260-262 (RAE) participates in ATP binding. Residue Glu-283 participates in L-serine binding. 347 to 350 (EISS) serves as a coordination point for ATP. Ser-383 contributes to the L-serine binding site.

The protein belongs to the class-II aminoacyl-tRNA synthetase family. Type-1 seryl-tRNA synthetase subfamily. As to quaternary structure, homodimer. The tRNA molecule binds across the dimer.

The protein localises to the cytoplasm. It carries out the reaction tRNA(Ser) + L-serine + ATP = L-seryl-tRNA(Ser) + AMP + diphosphate + H(+). It catalyses the reaction tRNA(Sec) + L-serine + ATP = L-seryl-tRNA(Sec) + AMP + diphosphate + H(+). The protein operates within aminoacyl-tRNA biosynthesis; selenocysteinyl-tRNA(Sec) biosynthesis; L-seryl-tRNA(Sec) from L-serine and tRNA(Sec): step 1/1. In terms of biological role, catalyzes the attachment of serine to tRNA(Ser). Is also able to aminoacylate tRNA(Sec) with serine, to form the misacylated tRNA L-seryl-tRNA(Sec), which will be further converted into selenocysteinyl-tRNA(Sec). In Heliobacterium modesticaldum (strain ATCC 51547 / Ice1), this protein is Serine--tRNA ligase.